An 89-amino-acid polypeptide reads, in one-letter code: Small ribosomal subunit protein uS15 (89 aa).

It belongs to the universal ribosomal protein uS15 family. In terms of assembly, part of the 30S ribosomal subunit. Forms a bridge to the 50S subunit in the 70S ribosome, contacting the 23S rRNA.

One of the primary rRNA binding proteins, it binds directly to 16S rRNA where it helps nucleate assembly of the platform of the 30S subunit by binding and bridging several RNA helices of the 16S rRNA. Its function is as follows. Forms an intersubunit bridge (bridge B4) with the 23S rRNA of the 50S subunit in the ribosome. This Chlamydia caviae (strain ATCC VR-813 / DSM 19441 / 03DC25 / GPIC) (Chlamydophila caviae) protein is Small ribosomal subunit protein uS15.